Here is a 129-residue protein sequence, read N- to C-terminus: Small ribosomal subunit protein uS11 (129 aa).

It belongs to the universal ribosomal protein uS11 family. As to quaternary structure, part of the 30S ribosomal subunit. Interacts with proteins S7 and S18. Binds to IF-3.

In terms of biological role, located on the platform of the 30S subunit, it bridges several disparate RNA helices of the 16S rRNA. Forms part of the Shine-Dalgarno cleft in the 70S ribosome. This chain is Small ribosomal subunit protein uS11, found in Oleidesulfovibrio alaskensis (strain ATCC BAA-1058 / DSM 17464 / G20) (Desulfovibrio alaskensis).